A 98-amino-acid chain; its full sequence is Beta-2-microglobulin (98 aa).

Residues 4 to 92 (PKVQVYSRFP…HETLKEPQVY (89 aa)) form the Ig-like C1-type domain. The cysteines at positions 24 and 79 are disulfide-linked.

Belongs to the beta-2-microglobulin family. Heterodimer of an alpha chain and a beta chain. Beta-2-microglobulin is the beta-chain of major histocompatibility complex class I molecules.

The protein localises to the secreted. Component of the class I major histocompatibility complex (MHC). Involved in the presentation of peptide antigens to the immune system. This Meleagris gallopavo (Wild turkey) protein is Beta-2-microglobulin (B2M).